The sequence spans 377 residues: Formate dehydrogenase, mitochondrial (377 aa).

A mitochondrion-targeting transit peptide spans 1 to 29 (MAAMWRAAARQLVDRAVGSRAAHTSAGSK). 2 residues coordinate substrate: Ile121 and Asn145. NAD(+) contacts are provided by residues Thr146, Asp220, 255–259 (PLTEK), Asn281, Asp307, and 331–334 (HISG).

Belongs to the D-isomer specific 2-hydroxyacid dehydrogenase family. FDH subfamily. Homodimer.

The protein resides in the mitochondrion. The catalysed reaction is formate + NAD(+) = CO2 + NADH. In terms of biological role, catalyzes the NAD(+)-dependent oxidation of formate to carbon dioxide. Involved in the cell stress response. The sequence is that of Formate dehydrogenase, mitochondrial from Hordeum vulgare (Barley).